The sequence spans 224 residues: Pre-hexon-linking protein VIII (224 aa).

T64 bears the Phosphothreonine; by host mark. Positions R112 to G154 are excised as a propeptide.

The protein belongs to the adenoviridae hexon-linking protein family. As to quaternary structure, interacts with the peripentonal hexons as well as the hexons in the facets. Part of a complex composed of the core-capsid bridging protein, the endosome lysis protein VI and the hexon-linking protein VIII; these interactions bridge the virus core to the capsid. In terms of processing, cleaved by the viral protease during virion maturation. May cause the middle segment to be shed from the capsid.

Its subcellular location is the virion. It localises to the host nucleus. In terms of biological role, structural component of the virion that acts as a cement protein on the capsid interior and which glue the peripentonal hexons and group-of-nine hexons together. The chain is Pre-hexon-linking protein VIII from Canine adenovirus serotype 1 (strain CLL) (CAdV-1).